Here is a 988-residue protein sequence, read N- to C-terminus: Ephrin type-B receptor 3 (988 aa).

The segment at 1 to 24 (GVSSRARRPPGSSRSSRRGVTSEL) is disordered. Over 1-534 (GVSSRARRPP…TSKTFQELPL (534 aa)) the chain is Extracellular. The region spanning 11–189 (GSSRSSRRGV…FYKKCSNTIA (179 aa)) is the Eph LBD domain. Cys53 and Cys171 are joined by a disulfide. Fibronectin type-III domains follow at residues 311–424 (VPSA…TNQA) and 425–522 (APSA…TAED). N-linked (GlcNAc...) asparagine glycans are attached at residues Asn323 and Asn418. Residues 535 to 555 (IVGSATAGLLFVIVVVIIAIV) form a helical membrane-spanning segment. The Cytoplasmic segment spans residues 556 to 988 (CFRKGMVTEQ…QMNQTLPVQV (433 aa)). The residue at position 604 (Tyr604) is a Phosphotyrosine; by autocatalysis. The region spanning 623 to 886 (VKIEEVIGAG…QIVNTLDKLI (264 aa)) is the Protein kinase domain. Residues 629–637 (IGAGEFGEV) and Lys655 each bind ATP. Asp748 functions as the Proton acceptor in the catalytic mechanism. The SAM domain occupies 915–979 (TTFTTVGDWL…LSSIQDMRLQ (65 aa)). The PDZ-binding motif lies at 986-988 (VQV).

The protein belongs to the protein kinase superfamily. Tyr protein kinase family. Ephrin receptor subfamily. Heterotetramer upon binding of the ligand. The heterotetramer is composed of an ephrin dimer and a receptor dimer. Oligomerization is probably required to induce biological responses. Phosphorylated. Autophosphorylates upon ligand-binding. Autophosphorylation on Tyr-604 is required for interaction with SH2 domain-containing proteins. As to expression, present in 10-day embryonic brain and body tissues. Prominent expression in kidney. Lower expression in lung, and barely detectable in brain, liver, heart, skeletal muscle and thymus.

It localises to the cell membrane. The protein resides in the cell projection. It is found in the dendrite. It catalyses the reaction L-tyrosyl-[protein] + ATP = O-phospho-L-tyrosyl-[protein] + ADP + H(+). Receptor tyrosine kinase which binds promiscuously transmembrane ephrin-B family ligands residing on adjacent cells, leading to contact-dependent bidirectional signaling into neighboring cells. The signaling pathway downstream of the receptor is referred to as forward signaling while the signaling pathway downstream of the ephrin ligand is referred to as reverse signaling. Generally has an overlapping and redundant function with EPHB2. Like EPHB2, functions in axon guidance during development. In addition to its role in axon guidance also plays an important redundant role with other ephrin-B receptors in development and maturation of dendritic spines and the formation of excitatory synapses. May control other aspects of development through regulation of cell migration and positioning. This is Ephrin type-B receptor 3 (EPHB3) from Gallus gallus (Chicken).